A 291-amino-acid chain; its full sequence is Aspartate carbamoyltransferase catalytic subunit (291 aa).

The carbamoyl phosphate site is built by Arg-49 and Thr-50. Lys-77 lines the L-aspartate pocket. Residues Arg-99, His-127, and Gln-130 each contribute to the carbamoyl phosphate site. Arg-160 and Arg-210 together coordinate L-aspartate. Residues Gly-249 and Pro-250 each contribute to the carbamoyl phosphate site.

The protein belongs to the aspartate/ornithine carbamoyltransferase superfamily. ATCase family. Heterododecamer (2C3:3R2) of six catalytic PyrB chains organized as two trimers (C3), and six regulatory PyrI chains organized as three dimers (R2).

It catalyses the reaction carbamoyl phosphate + L-aspartate = N-carbamoyl-L-aspartate + phosphate + H(+). It functions in the pathway pyrimidine metabolism; UMP biosynthesis via de novo pathway; (S)-dihydroorotate from bicarbonate: step 2/3. In terms of biological role, catalyzes the condensation of carbamoyl phosphate and aspartate to form carbamoyl aspartate and inorganic phosphate, the committed step in the de novo pyrimidine nucleotide biosynthesis pathway. The polypeptide is Aspartate carbamoyltransferase catalytic subunit (Sulfurimonas denitrificans (strain ATCC 33889 / DSM 1251) (Thiomicrospira denitrificans (strain ATCC 33889 / DSM 1251))).